The chain runs to 194 residues: Flagellin A2 (194 aa).

The propeptide occupies 1 to 12 (MFEFITDEDERG).

It belongs to the archaeal flagellin family. In terms of processing, glycosylated.

It localises to the archaeal flagellum. Functionally, flagellin is the subunit protein which polymerizes to form the filaments of archaeal flagella. In Halobacterium salinarum (strain ATCC 700922 / JCM 11081 / NRC-1) (Halobacterium halobium), this protein is Flagellin A2 (flaA2).